A 232-amino-acid chain; its full sequence is 7-cyano-7-deazaguanine synthase (232 aa).

ATP is bound at residue 8–18 (FSGGQDSTTCL). Residues Cys187, Cys196, Cys199, and Cys202 each coordinate Zn(2+).

This sequence belongs to the QueC family. Zn(2+) serves as cofactor.

The catalysed reaction is 7-carboxy-7-deazaguanine + NH4(+) + ATP = 7-cyano-7-deazaguanine + ADP + phosphate + H2O + H(+). It functions in the pathway purine metabolism; 7-cyano-7-deazaguanine biosynthesis. Its function is as follows. Catalyzes the ATP-dependent conversion of 7-carboxy-7-deazaguanine (CDG) to 7-cyano-7-deazaguanine (preQ(0)). The chain is 7-cyano-7-deazaguanine synthase from Shewanella denitrificans (strain OS217 / ATCC BAA-1090 / DSM 15013).